Reading from the N-terminus, the 172-residue chain is MFCLLLRRSAVHNSCKLISKQIAKPAFYTPHNALHTTIPRRHGEFEWQDPKSTDEIVNITYVDKDGKRTKVQGKVGDNVLYLAHRHGIEMEGACEASLACTTCHVYVQHDYLQKLKEAEEQEDDLLDMAPFLRENSRLGCQILLDKSMEGMELELPKATRNFYVDGHKPKPH.

Residues 57-159 (VNITYVDKDG…GMELELPKAT (103 aa)) form the 2Fe-2S ferredoxin-type domain. [2Fe-2S] cluster-binding residues include Cys94, Cys100, Cys103, and Cys140.

This sequence belongs to the adrenodoxin/putidaredoxin family. The cofactor is [2Fe-2S] cluster.

The protein localises to the mitochondrion matrix. Required for ecdysteroidogenesis in the prothoracic gland which is necessary for larval to pupal transition. The sequence is that of Adrenodoxin-like protein 1, mitochondrial from Drosophila melanogaster (Fruit fly).